A 514-amino-acid polypeptide reads, in one-letter code: Maturase K (514 aa).

It belongs to the intron maturase 2 family. MatK subfamily.

It is found in the plastid. The protein resides in the chloroplast. Functionally, usually encoded in the trnK tRNA gene intron. Probably assists in splicing its own and other chloroplast group II introns. This is Maturase K from Lepidozamia peroffskyana (Peroffsky's lepidozamia).